A 137-amino-acid chain; its full sequence is Basic phospholipase A2 homolog Bsc-K49 (137 aa).

The first 16 residues, M1–G16, serve as a signal peptide directing secretion. Intrachain disulfides connect C42-C131, C44-C60, C59-C111, C65-C137, C66-C104, C73-C97, and C91-C102. The important for membrane-damaging activities in eukaryotes and bacteria; heparin-binding stretch occupies residues K121 to K133.

It belongs to the phospholipase A2 family. Group II subfamily. K49 sub-subfamily. In terms of assembly, homodimer; non-covalently linked. As to expression, expressed by the venom gland.

It is found in the secreted. Functionally, snake venom phospholipase A2 that lacks enzymatic activity. Is myotoxic, and displays edema-inducing activities. A model of myotoxic mechanism has been proposed: an apo Lys49-PLA2 is activated by the entrance of a hydrophobic molecule (e.g. fatty acid) at the hydrophobic channel of the protein leading to a reorientation of a monomer. This reorientation causes a transition between 'inactive' to 'active' states, causing alignment of C-terminal and membrane-docking sites (MDoS) side-by-side and putting the membrane-disruption sites (MDiS) in the same plane, exposed to solvent and in a symmetric position for both monomers. The MDoS region stabilizes the toxin on membrane by the interaction of charged residues with phospholipid head groups. Subsequently, the MDiS region destabilizes the membrane with penetration of hydrophobic residues. This insertion causes a disorganization of the membrane, allowing an uncontrolled influx of ions (i.e. calcium and sodium), and eventually triggering irreversible intracellular alterations and cell death. The chain is Basic phospholipase A2 homolog Bsc-K49 from Bothriechis schlegelii (Eyelash palm pitviper).